We begin with the raw amino-acid sequence, 604 residues long: Elongation factor 4 1 (604 aa).

A tr-type G domain is found at 10 to 191; the sequence is EHIRNFCIIA…AIVDSVPAPT (182 aa). GTP is bound by residues 22-27 and 138-141; these read DHGKST and NKID.

It belongs to the TRAFAC class translation factor GTPase superfamily. Classic translation factor GTPase family. LepA subfamily.

It localises to the cell inner membrane. The enzyme catalyses GTP + H2O = GDP + phosphate + H(+). Its function is as follows. Required for accurate and efficient protein synthesis under certain stress conditions. May act as a fidelity factor of the translation reaction, by catalyzing a one-codon backward translocation of tRNAs on improperly translocated ribosomes. Back-translocation proceeds from a post-translocation (POST) complex to a pre-translocation (PRE) complex, thus giving elongation factor G a second chance to translocate the tRNAs correctly. Binds to ribosomes in a GTP-dependent manner. The polypeptide is Elongation factor 4 1 (Rhodopirellula baltica (strain DSM 10527 / NCIMB 13988 / SH1)).